Consider the following 531-residue polypeptide: Keratin, type II cytoskeletal 79 (531 aa).

The segment covering 1-12 has biased composition (polar residues); the sequence is MRSSLSRQTFST. Residues 1–55 are disordered; it reads MRSSLSRQTFSTKGGFSSNSASGGGGSRMRTSYSSVTMSRGSGGGGGVRSGSSSG. Residues 1–138 form a head region; the sequence is MRSSLSRQTF…DPEIQRVRTQ (138 aa). A compositionally biased stretch (low complexity) spans 28–40; sequence RMRTSYSSVTMSR. Positions 41–55 are enriched in gly residues; the sequence is GSGGGGGVRSGSSSG. The segment at 139–174 is coil 1A; the sequence is EREQIKTLNNKFASFIDKVRFLEQQNKVLETKWALL. Residues 139–453 form the IF rod domain; the sequence is EREQIKTLNN…KLLESEESRM (315 aa). Positions 175–194 are linker 1; sequence QEQSQNTGVARSLEPFFENY. The tract at residues 195 to 286 is coil 1B; the sequence is LSTLRRQLDT…QLFEMELSQV (92 aa). Positions 287-310 are linker 12; it reads QTNVSDTNVILSMDNNRNLDLDSI. Residues 311 to 449 form a coil 2 region; sequence IAEVKAQYEL…ATYRKLLESE (139 aa). Residues 450–531 are tail; the sequence is ESRMSGDCPS…TTVKTSSRRY (82 aa).

This sequence belongs to the intermediate filament family. Heterotetramer of two type I and two type II keratins.

The chain is Keratin, type II cytoskeletal 79 (Krt79) from Mus musculus (Mouse).